We begin with the raw amino-acid sequence, 416 residues long: Multifunctional CCA protein (416 aa).

Residues glycine 8 and arginine 11 each coordinate ATP. CTP contacts are provided by glycine 8 and arginine 11. Residues aspartate 21 and aspartate 23 each coordinate Mg(2+). Positions 91, 137, and 140 each coordinate ATP. CTP contacts are provided by arginine 91, arginine 137, and arginine 140. The HD domain occupies threonine 228–tryptophan 329.

Belongs to the tRNA nucleotidyltransferase/poly(A) polymerase family. Bacterial CCA-adding enzyme type 1 subfamily. In terms of assembly, monomer. Can also form homodimers and oligomers. Requires Mg(2+) as cofactor. Ni(2+) is required as a cofactor.

The catalysed reaction is a tRNA precursor + 2 CTP + ATP = a tRNA with a 3' CCA end + 3 diphosphate. The enzyme catalyses a tRNA with a 3' CCA end + 2 CTP + ATP = a tRNA with a 3' CCACCA end + 3 diphosphate. Catalyzes the addition and repair of the essential 3'-terminal CCA sequence in tRNAs without using a nucleic acid template. Adds these three nucleotides in the order of C, C, and A to the tRNA nucleotide-73, using CTP and ATP as substrates and producing inorganic pyrophosphate. tRNA 3'-terminal CCA addition is required both for tRNA processing and repair. Also involved in tRNA surveillance by mediating tandem CCA addition to generate a CCACCA at the 3' terminus of unstable tRNAs. While stable tRNAs receive only 3'-terminal CCA, unstable tRNAs are marked with CCACCA and rapidly degraded. This is Multifunctional CCA protein from Shewanella sp. (strain MR-7).